Reading from the N-terminus, the 657-residue chain is Katanin p80 WD40 repeat-containing subunit B1 (657 aa).

6 WD repeats span residues 18–58 (AHSS…CVMS), 61–100 (GHTT…ILRT), 103–142 (GHKA…CIFK), 145–184 (SHTQ…VMFE), 187–226 (GHSG…VVSC), and 229–269 (EEAT…DVVV). Disordered regions lie at residues 318 to 410 (NNEL…EDEP) and 423 to 454 (VEVQ…RAEP). Residues 325 to 345 (PTPTGSSLRRSYDRPSTSCSK) are compositionally biased toward polar residues. Basic and acidic residues predominate over residues 351 to 385 (HSSESERRSPSSEEDRDEKESKAEIQNPEDYKEIF).

It belongs to the WD repeat KATNB1 family. Interacts with KATNA1. This interaction enhances the microtubule binding and severing activity of KATNA1 and also targets this activity to the centrosome.

The protein resides in the cytoplasm. The protein localises to the cytoskeleton. It is found in the microtubule organizing center. Its subcellular location is the centrosome. It localises to the spindle pole. The protein resides in the spindle. Functionally, participates in a complex which severs microtubules in an ATP-dependent manner. May act to target the enzymatic subunit of this complex to sites of action such as the centrosome. Microtubule severing may promote rapid reorganization of cellular microtubule arrays and the release of microtubules from the centrosome following nucleation. In Gallus gallus (Chicken), this protein is Katanin p80 WD40 repeat-containing subunit B1.